The primary structure comprises 386 residues: Cytochrome b (386 aa).

4 consecutive transmembrane segments (helical) span residues 39–59, 83–104, 119–139, and 184–204; these read FGSL…FLAM, FMLK…YIHM, WNIG…GYVL, and FFSL…LHIL. 2 residues coordinate heme b: His-89 and His-103. Heme b is bound by residues His-188 and His-202. His-207 is an a ubiquinone binding site. The next 4 membrane-spanning stretches (helical) occupy residues 232-252, 294-314, 326-346, and 353-374; these read YKDL…CYFM, LGGV…PFIH, LGKI…WLGA, and YIMI…LVPL.

This sequence belongs to the cytochrome b family. The main subunits of complex b-c1 are: cytochrome b, cytochrome c1 and the Rieske protein. The cofactor is heme b.

It localises to the mitochondrion inner membrane. Functionally, component of the ubiquinol-cytochrome c reductase complex (complex III or cytochrome b-c1 complex) that is part of the mitochondrial respiratory chain. The b-c1 complex mediates electron transfer from ubiquinol to cytochrome c. Contributes to the generation of a proton gradient across the mitochondrial membrane that is then used for ATP synthesis. This Sarcophyton glaucum (Toadstool umbrella leather coral) protein is Cytochrome b (MT-CYB).